A 1079-amino-acid chain; its full sequence is DNA annealing helicase and endonuclease ZRANB3 (1079 aa).

A Helicase ATP-binding domain is found at 46–208; that stretch reads IFALKRNGRC…FMQIEALFPQ (163 aa). The interval 46–481 is DNA annealing helicase activity; the sequence is IFALKRNGRC…GRKEKIQAEE (436 aa). ATP is bound at residue 59-66; the sequence is DEMGLGKT. Positions 157 to 160 match the DEAH box motif; sequence DESH. The 157-residue stretch at 325 to 481 folds into the Helicase C-terminal domain; sequence AVKDYIKMML…GRKEKIQAEE (157 aa). The PIP-box motif lies at 519 to 526; the sequence is QHDIRSFF. Serine 569 bears the Phosphoserine mark. The segment at 582 to 601 is disordered; sequence ASEDHCSPSEETPSQSKQIR. Positions 590 to 600 are enriched in polar residues; it reads SEETPSQSKQI. The segment at 621-650 adopts a RanBP2-type zinc-finger fold; the sequence is PVEGWQCSLCTYINNSELPYCEMCETPQGS. Residue cysteine 630 is modified to (Microbial infection) S-methylcysteine. The interval 689 to 725 is disordered; it reads LAQSEPGQLADSKEETPKIEKEDGLTSQPGNEQWKSS. The segment covering 699–712 has biased composition (basic and acidic residues); the sequence is DSKEETPKIEKEDG. The segment covering 713 to 725 has biased composition (polar residues); sequence LTSQPGNEQWKSS. The HNH domain occupies 1011–1051; that stretch reads PGEGHFWQVDHIKPVYGGGGQCSLDNLQTLCTVCHKERTAR. Positions 1011–1079 are endonuclease activity; it reads PGEGHFWQVD…SDITRFLVKK (69 aa). An APIM motif motif is present at residues 1074–1078; sequence RFLVK.

It belongs to the SNF2/RAD54 helicase family. Interacts (via PIP-box and RanBP2-type zinc finger) with PCNA (when PCNA is polyubiquitinated via 'Lys-63'-linked polyubiquitin). (Microbial infection) Methylation at Cys-630 by enteropathogenic E.coli protein NleE or S.flexneri protein OspZ: methylation disrupts ability to bind 'Lys-63'-linked ubiquitin.

The protein localises to the nucleus. It is found in the chromosome. In terms of biological role, DNA annealing helicase and endonuclease required to maintain genome stability at stalled or collapsed replication forks by facilitating fork restart and limiting inappropriate recombination that could occur during template switching events. Recruited to the sites of stalled DNA replication by polyubiquitinated PCNA and acts as a structure-specific endonuclease that cleaves the replication fork D-loop intermediate, generating an accessible 3'-OH group in the template of the leading strand, which is amenable to extension by DNA polymerase. In addition to endonuclease activity, also catalyzes the fork regression via annealing helicase activity in order to prevent disintegration of the replication fork and the formation of double-strand breaks. In Homo sapiens (Human), this protein is DNA annealing helicase and endonuclease ZRANB3.